Here is a 501-residue protein sequence, read N- to C-terminus: Proline--tRNA ligase (501 aa).

It belongs to the class-II aminoacyl-tRNA synthetase family. ProS type 3 subfamily. As to quaternary structure, homodimer.

It is found in the cytoplasm. The enzyme catalyses tRNA(Pro) + L-proline + ATP = L-prolyl-tRNA(Pro) + AMP + diphosphate. Its function is as follows. Catalyzes the attachment of proline to tRNA(Pro) in a two-step reaction: proline is first activated by ATP to form Pro-AMP and then transferred to the acceptor end of tRNA(Pro). This is Proline--tRNA ligase from Halobacterium salinarum (strain ATCC 29341 / DSM 671 / R1).